The primary structure comprises 931 residues: Protocadherin gamma-A1 (931 aa).

A signal peptide spans 1–28; sequence MKIQKKLTGCSRLMLLCLSLELLLEAGA. 6 consecutive Cadherin domains span residues 29–133, 134–242, 243–347, 348–452, 453–562, and 570–682; these read GNIH…TPQF, QLEE…PPAF, TQAQ…APEV, TITS…SPVF, HQDS…APEI, and DGST…EPSA. The Extracellular portion of the chain corresponds to 29 to 692; it reads GNIHYSVPEE…KPNDSDLTLY (664 aa). N-linked (GlcNAc...) asparagine glycosylation is found at Asn-265, Asn-419, and Asn-545. An N-linked (GlcNAc...) asparagine glycan is attached at Asn-685. A helical membrane pass occupies residues 693 to 713; the sequence is LVVAAAAVSCVFLAFVIVLLA. The Cytoplasmic portion of the chain corresponds to 714 to 931; the sequence is HRLRRWHKSR…KKKSGKKEKK (218 aa). Disordered regions lie at residues 801-840 and 901-931; these read KKEP…WPNN and ATLT…KEKK. The segment covering 805–840 has biased composition (polar residues); that stretch reads FSQQAPPNTDWRFSQAQRPGTSGSQNGDDTGTWPNN. Residues 921-931 show a composition bias toward basic residues; the sequence is NKKKSGKKEKK.

The protein localises to the cell membrane. In terms of biological role, potential calcium-dependent cell-adhesion protein. May be involved in the establishment and maintenance of specific neuronal connections in the brain. The sequence is that of Protocadherin gamma-A1 (PCDHGA1) from Homo sapiens (Human).